A 148-amino-acid chain; its full sequence is Large ribosomal subunit protein bL9 (148 aa).

This sequence belongs to the bacterial ribosomal protein bL9 family.

Functionally, binds to the 23S rRNA. The sequence is that of Large ribosomal subunit protein bL9 from Syntrophotalea carbinolica (strain DSM 2380 / NBRC 103641 / GraBd1) (Pelobacter carbinolicus).